The sequence spans 428 residues: 3-phosphoshikimate 1-carboxyvinyltransferase (428 aa).

3-phosphoshikimate contacts are provided by Lys21, Ser22, and Arg26. Lys21 serves as a coordination point for phosphoenolpyruvate. Gly91 and Arg119 together coordinate phosphoenolpyruvate. 4 residues coordinate 3-phosphoshikimate: Ser164, Gln166, Asp313, and Lys340. Position 166 (Gln166) interacts with phosphoenolpyruvate. The active-site Proton acceptor is Asp313. 2 residues coordinate phosphoenolpyruvate: Arg344 and Arg386.

The protein belongs to the EPSP synthase family. As to quaternary structure, monomer.

Its subcellular location is the cytoplasm. The catalysed reaction is 3-phosphoshikimate + phosphoenolpyruvate = 5-O-(1-carboxyvinyl)-3-phosphoshikimate + phosphate. The protein operates within metabolic intermediate biosynthesis; chorismate biosynthesis; chorismate from D-erythrose 4-phosphate and phosphoenolpyruvate: step 6/7. Catalyzes the transfer of the enolpyruvyl moiety of phosphoenolpyruvate (PEP) to the 5-hydroxyl of shikimate-3-phosphate (S3P) to produce enolpyruvyl shikimate-3-phosphate and inorganic phosphate. The polypeptide is 3-phosphoshikimate 1-carboxyvinyltransferase (Campylobacter jejuni subsp. jejuni serotype O:2 (strain ATCC 700819 / NCTC 11168)).